Here is a 584-residue protein sequence, read N- to C-terminus: Adenine deaminase (584 aa).

This sequence belongs to the metallo-dependent hydrolases superfamily. Adenine deaminase family. Mn(2+) serves as cofactor.

The enzyme catalyses adenine + H2O + H(+) = hypoxanthine + NH4(+). This Methanococcoides burtonii (strain DSM 6242 / NBRC 107633 / OCM 468 / ACE-M) protein is Adenine deaminase.